Reading from the N-terminus, the 90-residue chain is MATRQSVDEHLQQCMQAYDYAEEQLKIASKQEHYNDQEYSDAQMQLEDAVNALNKLWLSSNDQQREQLYRMRLQLQSLQNNMILQHPLDV.

The stretch at 36–82 forms a coiled coil; it reads DQEYSDAQMQLEDAVNALNKLWLSSNDQQREQLYRMRLQLQSLQNNM.

This is an uncharacterized protein from Bacillus subtilis (strain 168).